The following is a 118-amino-acid chain: UPF0342 protein Hore_03100 (118 aa).

The protein belongs to the UPF0342 family.

This chain is UPF0342 protein Hore_03100, found in Halothermothrix orenii (strain H 168 / OCM 544 / DSM 9562).